A 445-amino-acid chain; its full sequence is ATPase PAAT (445 aa).

A phosphoserine mark is found at Ser-177, Ser-182, Ser-254, and Ser-302. Residues 426 to 445 (PTGIPLRHYDSGERLSNGER) form a disordered region. Over residues 432–445 (RHYDSGERLSNGER) the composition is skewed to basic and acidic residues.

In terms of assembly, homodimer. Interacts with ABCB7, ABCB8/MITOSUR and ABCB10.

The protein resides in the cytoplasm. It localises to the mitochondrion. It carries out the reaction ATP + H2O = ADP + phosphate + H(+). Its function is as follows. ATPase that regulates mitochondrial ABC transporters ABCB7, ABCB8/MITOSUR and ABCB10. Regulates mitochondrial ferric concentration and heme biosynthesis and plays a role in the maintenance of mitochondrial homeostasis and cell survival. The sequence is that of ATPase PAAT from Homo sapiens (Human).